The following is a 313-amino-acid chain: NAD-capped RNA hydrolase NudC (313 aa).

Residue R111 coordinates substrate. One can recognise a Nudix hydrolase domain in the interval 168–293; sequence PRIDPAVICL…DWSSASESKL (126 aa). Positions 202, 218, and 222 each coordinate a divalent metal cation. The short motif at 203 to 224 is the Nudix box element; the sequence is GFVEAGESFEVCVAREIREEIG. Substrate is bound at residue 236 to 243; that stretch reads QQWPFPRS. E264 provides a ligand contact to a divalent metal cation.

This sequence belongs to the Nudix hydrolase family. NudC subfamily. As to quaternary structure, homodimer. Requires Mg(2+) as cofactor. Mn(2+) serves as cofactor.

It catalyses the reaction a 5'-end NAD(+)-phospho-ribonucleoside in mRNA + H2O = a 5'-end phospho-adenosine-phospho-ribonucleoside in mRNA + beta-nicotinamide D-ribonucleotide + 2 H(+). The enzyme catalyses NAD(+) + H2O = beta-nicotinamide D-ribonucleotide + AMP + 2 H(+). It carries out the reaction NADH + H2O = reduced beta-nicotinamide D-ribonucleotide + AMP + 2 H(+). In terms of biological role, mRNA decapping enzyme that specifically removes the nicotinamide adenine dinucleotide (NAD) cap from a subset of mRNAs by hydrolyzing the diphosphate linkage to produce nicotinamide mononucleotide (NMN) and 5' monophosphate mRNA. The NAD-cap is present at the 5'-end of some mRNAs and stabilizes RNA against 5'-processing. Has preference for mRNAs with a 5'-end purine. Catalyzes the hydrolysis of a broad range of dinucleotide pyrophosphates. This Mycobacterium tuberculosis (strain ATCC 25177 / H37Ra) protein is NAD-capped RNA hydrolase NudC.